The following is a 540-amino-acid chain: uncharacterized protein (540 aa).

The Cytoplasmic segment spans residues 1-61 (MFSIFKKKTS…TNDSPWQDPT (61 aa)). The chain crosses the membrane as a helical span at residues 62 to 82 (YFSSFGKELMFIATCMLAQLL). Residues 83–108 (NQAGQTHALCIMNVLSKSFNSEANNQ) lie on the Extracellular side of the membrane. A helical transmembrane segment spans residues 109–129 (AWLMASFPLAAGSFILISGRL). Over 130 to 131 (GD) the chain is Cytoplasmic. The helical transmembrane segment at 132–152 (IYGLKKMLIVGYVIVIVWSII) threads the bilayer. The Extracellular portion of the chain corresponds to 153-169 (SGLSKYSNSDAFFITSR). A helical transmembrane segment spans residues 170-190 (AFQGVGIAFILPNIMGLVGHV). Residues 191–203 (YKVGSFRKNIVIS) lie on the Cytoplasmic side of the membrane. Residues 204 to 224 (FIGACAPTGGMFGGLFGGLIV) form a helical membrane-spanning segment. Residues 225–232 (TEDPNQWP) lie on the Extracellular side of the membrane. The chain crosses the membrane as a helical span at residues 233–253 (WVFYAFGIATFLSLLMAWYSI). At 254 to 272 (PNNVPTNIHGLSMDWTGSA) the chain is on the cytoplasmic side. Residues 273 to 293 (LAIIGLILFNFVWNQAPIVGW) form a helical membrane-spanning segment. At 294–295 (DK) the chain is on the extracellular side. A helical membrane pass occupies residues 296-316 (PYIIVLLIISVIFLVAFFVYE). Topologically, residues 317 to 334 (SKYAEVPLLPRAMTKNRH) are cytoplasmic. Residues 335–355 (MIMILLAVFLGWGSFGIWTFY) traverse the membrane as a helical segment. Residues 356–372 (YVSFQLNLRHYSPVWTG) lie on the Extracellular side of the membrane. Residues 373-393 (GTYFVFVIFGSMAAFFVAFSI) form a helical membrane-spanning segment. Over 394–398 (KRLGP) the chain is Cytoplasmic. The chain crosses the membrane as a helical span at residues 399–419 (ALLLCFSLMAFDAGSIMFSVL). Topologically, residues 420 to 429 (PVEQSYWKLN) are extracellular. A helical transmembrane segment spans residues 430-450 (FAMQAILCFGMDLSFPASSII). Residues 451-461 (LSDGLPMQYQG) are Cytoplasmic-facing. A helical transmembrane segment spans residues 462–482 (MAGSLVNTVINYSASLCLGMG). Residues 483–502 (GTVEHQINKSGNDLLKGYRA) are Extracellular-facing. The chain crosses the membrane as a helical span at residues 503–523 (AVYLGVGLASLGVVISVTYML). Residues 524–540 (ENLWNRHRKSEDRSLEA) are Cytoplasmic-facing.

The protein belongs to the major facilitator superfamily.

The protein localises to the membrane. This is an uncharacterized protein from Saccharomyces cerevisiae (strain ATCC 204508 / S288c) (Baker's yeast).